Consider the following 138-residue polypeptide: UPF0251 protein Dole_1957 (138 aa).

The protein belongs to the UPF0251 family.

This chain is UPF0251 protein Dole_1957, found in Desulfosudis oleivorans (strain DSM 6200 / JCM 39069 / Hxd3) (Desulfococcus oleovorans).